The primary structure comprises 252 residues: Octanoyltransferase (252 aa).

A compositionally biased stretch (low complexity) spans 1–21 (MPSAPAAPAAPAAPDAAASVA). A disordered region spans residues 1–22 (MPSAPAAPAAPAAPDAAASVAP). Positions 56–237 (PDTDDEIWVV…RLIAHLDGAT (182 aa)) constitute a BPL/LPL catalytic domain. Substrate contacts are provided by residues 96 to 103 (RGGQITYH), 168 to 170 (ALG), and 181 to 183 (GLS). Cysteine 199 acts as the Acyl-thioester intermediate in catalysis.

The protein belongs to the LipB family.

The protein localises to the cytoplasm. The catalysed reaction is octanoyl-[ACP] + L-lysyl-[protein] = N(6)-octanoyl-L-lysyl-[protein] + holo-[ACP] + H(+). Its pathway is protein modification; protein lipoylation via endogenous pathway; protein N(6)-(lipoyl)lysine from octanoyl-[acyl-carrier-protein]: step 1/2. Catalyzes the transfer of endogenously produced octanoic acid from octanoyl-acyl-carrier-protein onto the lipoyl domains of lipoate-dependent enzymes. Lipoyl-ACP can also act as a substrate although octanoyl-ACP is likely to be the physiological substrate. This chain is Octanoyltransferase, found in Burkholderia pseudomallei (strain 668).